A 416-amino-acid chain; its full sequence is Gamma-glutamyl phosphate reductase (416 aa).

It belongs to the gamma-glutamyl phosphate reductase family.

It localises to the cytoplasm. The enzyme catalyses L-glutamate 5-semialdehyde + phosphate + NADP(+) = L-glutamyl 5-phosphate + NADPH + H(+). Its pathway is amino-acid biosynthesis; L-proline biosynthesis; L-glutamate 5-semialdehyde from L-glutamate: step 2/2. Catalyzes the NADPH-dependent reduction of L-glutamate 5-phosphate into L-glutamate 5-semialdehyde and phosphate. The product spontaneously undergoes cyclization to form 1-pyrroline-5-carboxylate. The sequence is that of Gamma-glutamyl phosphate reductase from Salmonella newport (strain SL254).